The sequence spans 411 residues: MNVINETANVLKLETGSVTSAKGFSAVGIHTGVKRKRKDLGAIVCEVPASSAAVYTLNKVQAAPLKVTQESIAVEGKLQAMIVNSGIANACTGKRGLDDAYTMRAVGAETFHIPEHYVAVTSTGVIGEFLPMDVITNGIRQLKPEATIEGAHAFNEAILTTDTVEKHTCYQTIVNGKTVTVGGVAKGSGMIHPNMATMLSFVTTDANIDHGHLQGALSAITNETFNRITVDGDTSTNDMVVVMASGLAENEALTPEHPDWANFYKALQLACEDLAKQIARDGEGATKLIEVEVTGAANDQEAGMVAKQIVGSDLVKTAIYGADANWGRIICAIGYSGCEVNQETIDIAIGPIVTLKQSEPTGFSEEEATAYLKEADPVKISVNLHIGNGTGKAWGCDLTYDYVRINAGYRT.

Residues threonine 160, lysine 186, threonine 197, glutamate 283, asparagine 406, and threonine 411 each coordinate substrate. Threonine 197 functions as the Nucleophile in the catalytic mechanism.

Belongs to the ArgJ family. In terms of assembly, heterotetramer of two alpha and two beta chains.

Its subcellular location is the cytoplasm. The enzyme catalyses N(2)-acetyl-L-ornithine + L-glutamate = N-acetyl-L-glutamate + L-ornithine. The catalysed reaction is L-glutamate + acetyl-CoA = N-acetyl-L-glutamate + CoA + H(+). The protein operates within amino-acid biosynthesis; L-arginine biosynthesis; L-ornithine and N-acetyl-L-glutamate from L-glutamate and N(2)-acetyl-L-ornithine (cyclic): step 1/1. Its pathway is amino-acid biosynthesis; L-arginine biosynthesis; N(2)-acetyl-L-ornithine from L-glutamate: step 1/4. Its activity is regulated as follows. Feedback inhibition by L-ornithine. In terms of biological role, catalyzes two activities which are involved in the cyclic version of arginine biosynthesis: the synthesis of N-acetylglutamate from glutamate and acetyl-CoA as the acetyl donor, and of ornithine by transacetylation between N(2)-acetylornithine and glutamate. In Halalkalibacterium halodurans (strain ATCC BAA-125 / DSM 18197 / FERM 7344 / JCM 9153 / C-125) (Bacillus halodurans), this protein is Arginine biosynthesis bifunctional protein ArgJ.